Reading from the N-terminus, the 483-residue chain is Regulatory protein ViaA (483 aa).

It belongs to the ViaA family. Homodimer. Interacts with RavA.

The protein localises to the cytoplasm. Functionally, component of the RavA-ViaA chaperone complex, which may act on the membrane to optimize the function of some of the respiratory chains. ViaA stimulates the ATPase activity of RavA. The sequence is that of Regulatory protein ViaA from Salmonella typhi.